Reading from the N-terminus, the 64-residue chain is Large ribosomal subunit protein bL32 (64 aa).

Residues 1–35 (MAVQKSRVTPSRRGQRRSHDALTAKQLSTDPTSGE) are disordered.

It belongs to the bacterial ribosomal protein bL32 family.

The protein is Large ribosomal subunit protein bL32 of Xanthomonas axonopodis pv. citri (strain 306).